Here is a 250-residue protein sequence, read N- to C-terminus: Adapter protein MecA (250 aa).

This sequence belongs to the MecA family. As to quaternary structure, homodimer.

Its function is as follows. Enables the recognition and targeting of unfolded and aggregated proteins to the ClpC protease or to other proteins involved in proteolysis. The sequence is that of Adapter protein MecA from Streptococcus sanguinis (strain SK36).